Reading from the N-terminus, the 250-residue chain is 5'-nucleotidase SurE (250 aa).

A divalent metal cation is bound by residues aspartate 8, aspartate 9, serine 39, and asparagine 91.

Belongs to the SurE nucleotidase family. A divalent metal cation serves as cofactor.

It is found in the cytoplasm. The enzyme catalyses a ribonucleoside 5'-phosphate + H2O = a ribonucleoside + phosphate. Its function is as follows. Nucleotidase that shows phosphatase activity on nucleoside 5'-monophosphates. The protein is 5'-nucleotidase SurE of Leptospira borgpetersenii serovar Hardjo-bovis (strain JB197).